The sequence spans 128 residues: Sulfurtransferase TusD (128 aa).

C78 functions as the Cysteine persulfide intermediate in the catalytic mechanism.

This sequence belongs to the DsrE/TusD family. In terms of assembly, heterohexamer, formed by a dimer of trimers. The hexameric TusBCD complex contains 2 copies each of TusB, TusC and TusD. The TusBCD complex interacts with TusE.

It localises to the cytoplasm. Its function is as follows. Part of a sulfur-relay system required for 2-thiolation of 5-methylaminomethyl-2-thiouridine (mnm(5)s(2)U) at tRNA wobble positions. Accepts sulfur from TusA and transfers it in turn to TusE. This chain is Sulfurtransferase TusD, found in Klebsiella pneumoniae subsp. pneumoniae (strain ATCC 700721 / MGH 78578).